Consider the following 213-residue polypeptide: MAQETNQTPGPMLCSTGCGFYGNPRTNGMCSVCYKEHLQRQQNSGRMSPMGTASGSNSPTSDSASVQRADATLNNCEGAAGSTSEKSRNVPVAALPVTQQMTEMSISREDKITSPKTEVSEPVVTQPSPSVSQPSSSQSEEKAPELPKPKKNRCFMCRKKVGLTGFDCRCGNLFCGLHRYSDKHNCPYDYKAEAAAKIRKENPVVVAEKIQRI.

Residues 8 to 42 (TPGPMLCSTGCGFYGNPRTNGMCSVCYKEHLQRQQ) form an A20-type zinc finger. Zn(2+) is bound by residues cysteine 14, cysteine 18, cysteine 30, and cysteine 33. The tract at residues 39 to 149 (QRQQNSGRMS…EEKAPELPKP (111 aa)) is disordered. A compositionally biased stretch (polar residues) spans 40–66 (RQQNSGRMSPMGTASGSNSPTSDSASV). Phosphoserine is present on residues serine 48 and serine 58. Over residues 120 to 138 (SEPVVTQPSPSVSQPSSSQ) the composition is skewed to low complexity. Residues 139–148 (SEEKAPELPK) show a composition bias toward basic and acidic residues. The AN1-type zinc-finger motif lies at 148-194 (KPKKNRCFMCRKKVGLTGFDCRCGNLFCGLHRYSDKHNCPYDYKAEA). Zn(2+) contacts are provided by cysteine 154, cysteine 157, cysteine 168, cysteine 170, cysteine 175, histidine 178, histidine 184, and cysteine 186. Lysine 209 carries the post-translational modification N6-acetyllysine.

In terms of assembly, homooligomer and/or heterooligomer. Interacts (via A20-type domain) with IKBKG and RIPK1 and with TRAF6 (via AN1-type domain). Interacts with ubiquitin and polyubiquitinated proteins. Identified in a heterotrimeric complex with ubiquitin and SQSTM1, where ZFAND5 and SQSTM1 both interact with the same ubiquitin molecule.

Its subcellular location is the cytoplasm. Functionally, involved in protein degradation via the ubiquitin-proteasome system. May act by anchoring ubiquitinated proteins to the proteasome. Plays a role in ubiquitin-mediated protein degradation during muscle atrophy. Plays a role in the regulation of NF-kappa-B activation and apoptosis. Inhibits NF-kappa-B activation triggered by overexpression of RIPK1 and TRAF6 but not of RELA. Also inhibits tumor necrosis factor (TNF), IL-1 and TLR4-induced NF-kappa-B activation in a dose-dependent manner. Overexpression sensitizes cells to TNF-induced apoptosis. Is a potent inhibitory factor for osteoclast differentiation. In Rattus norvegicus (Rat), this protein is AN1-type zinc finger protein 5 (Zfand5).